We begin with the raw amino-acid sequence, 172 residues long: Shikimate kinase (172 aa).

Residue 14–19 participates in ATP binding; it reads GAGKST. Residue S18 participates in Mg(2+) binding. Substrate is bound by residues D36, R60, and G82. Residue R120 coordinates ATP. R139 is a substrate binding site. Q156 lines the ATP pocket.

This sequence belongs to the shikimate kinase family. As to quaternary structure, monomer. It depends on Mg(2+) as a cofactor.

The protein localises to the cytoplasm. It carries out the reaction shikimate + ATP = 3-phosphoshikimate + ADP + H(+). It functions in the pathway metabolic intermediate biosynthesis; chorismate biosynthesis; chorismate from D-erythrose 4-phosphate and phosphoenolpyruvate: step 5/7. Its function is as follows. Catalyzes the specific phosphorylation of the 3-hydroxyl group of shikimic acid using ATP as a cosubstrate. The sequence is that of Shikimate kinase from Vibrio parahaemolyticus serotype O3:K6 (strain RIMD 2210633).